A 790-amino-acid polypeptide reads, in one-letter code: Pentatricopeptide repeat-containing protein OTP51, chloroplastic (790 aa).

The N-terminal 56 residues, 1-56, are a transit peptide targeting the chloroplast; sequence MATTSPCAAPSPSLRCPLALSHPFASPPPPPALRLAGPKLLPGRLAVSPPPGIPAV. PPR repeat units follow at residues 182-216, 217-254, 256-296, 299-333, 334-368, 369-403, 404-438, 439-469, 473-507, and 509-543; these read NFALATRVADCLGRDGKVEKCREVFEAMVKQGRVP, AESTFHILIVAYLSVPKGRCLEEACTIYNQMIQMGGYK, RLSL…NLDV, DVYAGLIWLHSYQDVIDRERIIALRKEMKQAGFDE, GIDVLVSVMRAFSKEGNVAETEATWHNILQSGSDL, PVQAYVCRMEAYARTGEPMKSLDMFKEMKDKNIPP, NVASYHKIIEIMTKALEVDIVEQLMNEFIESDMKH, LMPAFLDLMYMYMDLDMHEKLELTFLKCIAR, NRILYTIYLESLVKVGNIEKAEEVFGEMHNNGMIG, and NTKSCNIMLRGYLSAEDYQKAEKVYDMMSKKKYDV. The segment at 762 to 790 is disordered; that stretch reads GSSIGSDGTQDTDTDSDDDMQMSDTERDE. Acidic residues predominate over residues 771-790; that stretch reads QDTDTDSDDDMQMSDTERDE.

Belongs to the PPR family. P subfamily.

Its subcellular location is the plastid. The protein resides in the chloroplast. Functionally, promotes the splicing of group II introns in chloroplasts. Required for the splicing of intron 2 of plastid ycf3 transcripts, a factor required for the assembly of photosystem I (PSI). Involved in the splicing of atpF, ndhA, petB and rps16 chloroplastic transcripts. Required for the assembly of PSI. The sequence is that of Pentatricopeptide repeat-containing protein OTP51, chloroplastic from Oryza sativa subsp. japonica (Rice).